The following is a 231-amino-acid chain: Cytochrome c oxidase subunit 2 (231 aa).

Residues 1–30 (MNNFFQGYNLLFQHSLFASYMDWFHAFNCS) are Mitochondrial intermembrane-facing. A helical membrane pass occupies residues 31-51 (LLLGVLVFVTLLFGYLIFSTF). The Mitochondrial matrix segment spans residues 52 to 64 (YFKSKKIEYQFGE). Residues 65–85 (LLCSIFPTIILLMQMVPSLSL) form a helical membrane-spanning segment. At 86 to 231 (LYYYGLMNLD…FKSWCFGTME (146 aa)) the chain is on the mitochondrial intermembrane side. Residues His164, Cys199, Glu201, Cys203, His207, and Met210 each coordinate Cu cation. Residue Glu201 participates in Mg(2+) binding.

The protein belongs to the cytochrome c oxidase subunit 2 family. In terms of assembly, component of the cytochrome c oxidase (complex IV, CIV), a multisubunit enzyme composed of a catalytic core of 3 subunits and several supernumerary subunits. The complex exists as a monomer or a dimer and forms supercomplexes (SCs) in the inner mitochondrial membrane with ubiquinol-cytochrome c oxidoreductase (cytochrome b-c1 complex, complex III, CIII). The cofactor is Cu cation.

The protein resides in the mitochondrion inner membrane. The catalysed reaction is 4 Fe(II)-[cytochrome c] + O2 + 8 H(+)(in) = 4 Fe(III)-[cytochrome c] + 2 H2O + 4 H(+)(out). Its function is as follows. Component of the cytochrome c oxidase, the last enzyme in the mitochondrial electron transport chain which drives oxidative phosphorylation. The respiratory chain contains 3 multisubunit complexes succinate dehydrogenase (complex II, CII), ubiquinol-cytochrome c oxidoreductase (cytochrome b-c1 complex, complex III, CIII) and cytochrome c oxidase (complex IV, CIV), that cooperate to transfer electrons derived from NADH and succinate to molecular oxygen, creating an electrochemical gradient over the inner membrane that drives transmembrane transport and the ATP synthase. Cytochrome c oxidase is the component of the respiratory chain that catalyzes the reduction of oxygen to water. Electrons originating from reduced cytochrome c in the intermembrane space (IMS) are transferred via the dinuclear copper A center (CU(A)) of subunit 2 and heme A of subunit 1 to the active site in subunit 1, a binuclear center (BNC) formed by heme A3 and copper B (CU(B)). The BNC reduces molecular oxygen to 2 water molecules using 4 electrons from cytochrome c in the IMS and 4 protons from the mitochondrial matrix. This is Cytochrome c oxidase subunit 2 (cox-2) from Caenorhabditis briggsae.